Here is a 338-residue protein sequence, read N- to C-terminus: Methionyl-tRNA formyltransferase (338 aa).

110 to 113 (SLLP) lines the (6S)-5,6,7,8-tetrahydrofolate pocket.

The protein belongs to the Fmt family.

The catalysed reaction is L-methionyl-tRNA(fMet) + (6R)-10-formyltetrahydrofolate = N-formyl-L-methionyl-tRNA(fMet) + (6S)-5,6,7,8-tetrahydrofolate + H(+). In terms of biological role, attaches a formyl group to the free amino group of methionyl-tRNA(fMet). The formyl group appears to play a dual role in the initiator identity of N-formylmethionyl-tRNA by promoting its recognition by IF2 and preventing the misappropriation of this tRNA by the elongation apparatus. This chain is Methionyl-tRNA formyltransferase, found in Synechococcus sp. (strain CC9902).